The sequence spans 246 residues: Myelin protein P0 (246 aa).

Positions 1-27 are cleaved as a signal peptide; the sequence is MFRDLKPAYLFCCSVLYAFSVLRPSQG. One can recognise an Ig-like V-type domain in the interval 28–143; it reads ISVSTHHNLH…VGTSSDVHLT (116 aa). The Extracellular segment spans residues 28 to 150; the sequence is ISVSTHHNLH…HLTVYDKIPP (123 aa). Cys48 and Cys125 are joined by a disulfide. The N-linked (GlcNAc...) (complex) asparagine glycan is linked to Asn120. Residues 151 to 178 traverse the membrane as a helical segment; that stretch reads VGAGVVSGAIIGTFLGIILLIVGGLYLF. Topologically, residues 179 to 246 are cytoplasmic; sequence RYIVRRRARS…KLSESKRDKK (68 aa). Positions 200–246 are disordered; the sequence is AERGKVSGKAGTVSKGPVLYATLDQSKSGKGASEKKSKLSESKRDKK. Residues 231–246 are compositionally biased toward basic and acidic residues; that stretch reads ASEKKSKLSESKRDKK.

Belongs to the myelin P0 protein family. In terms of processing, N-glycan is sulfated. Found only in peripheral nervous system Schwann cells.

Its subcellular location is the cell membrane. Functionally, creation of an extracellular membrane face which guides the wrapping process and ultimately compacts adjacent lamellae. This chain is Myelin protein P0 (mpz), found in Heterodontus francisci (Horn shark).